Here is a 76-residue protein sequence, read N- to C-terminus: Small ribosomal subunit protein bS18 (76 aa).

It belongs to the bacterial ribosomal protein bS18 family. Part of the 30S ribosomal subunit. Forms a tight heterodimer with protein bS6.

Binds as a heterodimer with protein bS6 to the central domain of the 16S rRNA, where it helps stabilize the platform of the 30S subunit. The sequence is that of Small ribosomal subunit protein bS18 from Pseudomonas entomophila (strain L48).